Here is a 193-residue protein sequence, read N- to C-terminus: MTNSETLAMFKSSGALLDGHFKLTSGRHSNSYFQCAKVLQYPEYLSAICGEIAAHFRDSGITTVISPAIGGIVVGTEVGRQLGVKTIFAERKEGTMMIRRGFSIDPSEQVLVVEDVITTGGSVVEVMEQVKAAGATVAGVASVVDRSNGKVKLADKQFSLLMMEVVSYAPEECPLCKEGLPIDAPGSRSNAQG.

114–122 (EDVITTGGS) provides a ligand contact to 5-phospho-alpha-D-ribose 1-diphosphate. Orotate contacts are provided by threonine 118 and arginine 146.

Belongs to the purine/pyrimidine phosphoribosyltransferase family. PyrE subfamily. Homodimer. It depends on Mg(2+) as a cofactor.

The catalysed reaction is orotidine 5'-phosphate + diphosphate = orotate + 5-phospho-alpha-D-ribose 1-diphosphate. The protein operates within pyrimidine metabolism; UMP biosynthesis via de novo pathway; UMP from orotate: step 1/2. Its function is as follows. Catalyzes the transfer of a ribosyl phosphate group from 5-phosphoribose 1-diphosphate to orotate, leading to the formation of orotidine monophosphate (OMP). This Chlorobaculum parvum (strain DSM 263 / NCIMB 8327) (Chlorobium vibrioforme subsp. thiosulfatophilum) protein is Orotate phosphoribosyltransferase.